The chain runs to 766 residues: Pentatricopeptide repeat-containing protein At5g28460 (766 aa).

PPR repeat units lie at residues 151 to 181, 184 to 218, 221 to 257, 258 to 292, 293 to 327, 328 to 358, 369 to 404, 405 to 439, 440 to 474, 475 to 509, 510 to 544, 545 to 579, 580 to 614, 615 to 650, 651 to 685, and 686 to 720; these read TIVA…LDSN, NSQV…ESVF, NRIT…GVSP, NSVW…KTPL, EAPP…KIRP, DVVT…MRGK, DSIH…RCVP, NAVT…EIKP, NVVT…GVKG, NVVT…GCSP, DAKI…GFSL, DLLA…GKKP, DSIT…GLDP, TVTT…KVNP, NTVI…MVRP, and NVET…SCEP.

Belongs to the PPR family. P subfamily.

In Arabidopsis thaliana (Mouse-ear cress), this protein is Pentatricopeptide repeat-containing protein At5g28460.